The following is a 463-amino-acid chain: MVIGSGVFLTRTCYLRLQPPSLVLRRRFCAATTACSVPLNGNKKKKSEKEKVIVISGPTGAGKSRLAMELAKRLNGEIISADSVQVYKGLDVGSAKPSDSDRKVVPHHLIDILHPSQDYSVGQFYDDGRQATKDILNRGRVPIVTGGTGLYLRWFMYGKPDVPKPSPEVIAEAHDMLVGFQTEYNWDAAVELVVNAGDPKASSLPRNDWYRLRRSLEILKSTGSPPSSFRIPYDSFRVNLVAPDADDFLEDGSSADISIQNIETDLDYDFLCFFLSSPRVALYRSIDFRCEDMLSGPNGVLSEARWLLDLGLLPNSNPATRAIGYRQAMEYLLQCRRYEGESSPREFYAFLNKFQTASRNFAKRQMTWFRCEPMYHWLNASKPLDSILQCIYDAYESEAEMVEIPESLRMSKDVRDSREASELKGYRSKNRHFVRREDCSSVLEWIRSEGCKSEASCVESAIA.

Residue 57–64 coordinates ATP; it reads GPTGAGKS. 59–64 lines the substrate pocket; it reads TGAGKS. Positions 82-85 are interaction with substrate tRNA; it reads DSVQ.

It belongs to the IPP transferase family. Mg(2+) is required as a cofactor. Expressed ubiquitously, with highest expression in proliferating tissues.

The protein resides in the cytoplasm. It carries out the reaction adenosine(37) in tRNA + dimethylallyl diphosphate = N(6)-dimethylallyladenosine(37) in tRNA + diphosphate. Catalyzes the transfer of a dimethylallyl group onto the adenine at position 37 in tRNAs that read codons beginning with uridine, leading to the formation of N6-(dimethylallyl)adenosine (i(6)A). Involved in the cis-type cytokinin biosynthesis. The polypeptide is tRNA dimethylallyltransferase 9 (IPT9) (Arabidopsis thaliana (Mouse-ear cress)).